A 306-amino-acid chain; its full sequence is D-alanine--D-alanine ligase (306 aa).

Residues 101–300 enclose the ATP-grasp domain; sequence KVVMAAAGIP…FGELVTWMVE (200 aa). 128–182 is an ATP binding site; sequence LPPPYVLKPNTGGSSVGVFIVKEDQPHPPQELFRADWTFGESLMAEPFIKGLELT. Residues Asp-250, Glu-267, and Asn-269 each coordinate Mg(2+).

The protein belongs to the D-alanine--D-alanine ligase family. The cofactor is Mg(2+). It depends on Mn(2+) as a cofactor.

The protein resides in the cytoplasm. The enzyme catalyses 2 D-alanine + ATP = D-alanyl-D-alanine + ADP + phosphate + H(+). The protein operates within cell wall biogenesis; peptidoglycan biosynthesis. Cell wall formation. This Azorhizobium caulinodans (strain ATCC 43989 / DSM 5975 / JCM 20966 / LMG 6465 / NBRC 14845 / NCIMB 13405 / ORS 571) protein is D-alanine--D-alanine ligase.